A 940-amino-acid polypeptide reads, in one-letter code: Isoleucine--tRNA ligase (940 aa).

The short motif at 58-68 (PYANGNIHIGH) is the 'HIGH' region element. Position 563 (E563) interacts with L-isoleucyl-5'-AMP. The 'KMSKS' region signature appears at 604 to 608 (KMSKS). K607 contacts ATP. Residues C903, C906, C923, and C926 each coordinate Zn(2+).

It belongs to the class-I aminoacyl-tRNA synthetase family. IleS type 1 subfamily. As to quaternary structure, monomer. Zn(2+) serves as cofactor.

Its subcellular location is the cytoplasm. It carries out the reaction tRNA(Ile) + L-isoleucine + ATP = L-isoleucyl-tRNA(Ile) + AMP + diphosphate. Functionally, catalyzes the attachment of isoleucine to tRNA(Ile). As IleRS can inadvertently accommodate and process structurally similar amino acids such as valine, to avoid such errors it has two additional distinct tRNA(Ile)-dependent editing activities. One activity is designated as 'pretransfer' editing and involves the hydrolysis of activated Val-AMP. The other activity is designated 'posttransfer' editing and involves deacylation of mischarged Val-tRNA(Ile). This chain is Isoleucine--tRNA ligase, found in Buchnera aphidicola subsp. Acyrthosiphon pisum (strain APS) (Acyrthosiphon pisum symbiotic bacterium).